The sequence spans 786 residues: LPS-assembly protein LptD (786 aa).

A signal peptide spans 1-39; it reads MPPKPLFPNVFPGDGAPRKRRLALALLAVPGLVPAVSYA. The interval 767-786 is disordered; the sequence is PGYTPLPPPPPPMSRFSNYE. A compositionally biased stretch (pro residues) spans 770–779; sequence TPLPPPPPPM.

It belongs to the LptD family. In terms of assembly, component of the lipopolysaccharide transport and assembly complex. Interacts with LptE and LptA.

The protein localises to the cell outer membrane. Functionally, together with LptE, is involved in the assembly of lipopolysaccharide (LPS) at the surface of the outer membrane. This chain is LPS-assembly protein LptD, found in Burkholderia lata (strain ATCC 17760 / DSM 23089 / LMG 22485 / NCIMB 9086 / R18194 / 383).